Consider the following 223-residue polypeptide: Cytidylate kinase (223 aa).

Residue 10–18 (GPAGTGKSS) participates in ATP binding.

It belongs to the cytidylate kinase family. Type 1 subfamily.

It localises to the cytoplasm. The enzyme catalyses CMP + ATP = CDP + ADP. The catalysed reaction is dCMP + ATP = dCDP + ADP. This Mycobacterium leprae (strain Br4923) protein is Cytidylate kinase.